Consider the following 416-residue polypeptide: Probable endo-beta-1,4-glucanase celB (416 aa).

A signal peptide spans 1-17 (MIWTLAPFVALLPLVTA). N-linked (GlcNAc...) asparagine glycosylation is found at Asn-45, Asn-104, Asn-117, and Asn-135. Residue Glu-214 is the Nucleophile of the active site. The active-site Proton donor is the Glu-219. N-linked (GlcNAc...) asparagine glycans are attached at residues Asn-233, Asn-278, Asn-292, and Asn-382.

Belongs to the glycosyl hydrolase 7 (cellulase C) family.

Its subcellular location is the secreted. It catalyses the reaction Endohydrolysis of (1-&gt;4)-beta-D-glucosidic linkages in cellulose, lichenin and cereal beta-D-glucans.. Has endoglucanase activity on substrates containing beta-1,4 glycosidic bonds, like in carboxymethylcellulose (CMC), hydroxyethylcellulose (HEC) and beta-glucan. Involved in the degradation of complex natural cellulosic substrates. The polypeptide is Probable endo-beta-1,4-glucanase celB (celB) (Aspergillus flavus (strain ATCC 200026 / FGSC A1120 / IAM 13836 / NRRL 3357 / JCM 12722 / SRRC 167)).